The chain runs to 313 residues: Homoserine O-succinyltransferase (313 aa).

C142 acts as the Acyl-thioester intermediate in catalysis. K163 and S192 together coordinate substrate. H235 acts as the Proton acceptor in catalysis. Residue E237 is part of the active site. R249 is a substrate binding site.

This sequence belongs to the MetA family.

The protein resides in the cytoplasm. The enzyme catalyses L-homoserine + succinyl-CoA = O-succinyl-L-homoserine + CoA. The protein operates within amino-acid biosynthesis; L-methionine biosynthesis via de novo pathway; O-succinyl-L-homoserine from L-homoserine: step 1/1. In terms of biological role, transfers a succinyl group from succinyl-CoA to L-homoserine, forming succinyl-L-homoserine. The chain is Homoserine O-succinyltransferase from Aliivibrio fischeri (strain MJ11) (Vibrio fischeri).